The sequence spans 378 residues: Cytochrome P450 monooxygenase pytD (378 aa).

Cys321 lines the heme pocket.

This sequence belongs to the cytochrome P450 family. Heme serves as cofactor.

Its pathway is secondary metabolite biosynthesis. Cytochrome P450 monooxygenase pytD; part of the gene cluster that mediates the biosynthesis of pyranterreones, a family of antioxidative compounds. The first step of pyranonigrins biosynthesis is performed by the hybrid PKS-NRPS synthetase pytA that condenses 4 malonyl-CoA units ato the acetyl starter unit by the modular PKS of pytA. The acyl chain is then connected to an L-serine through the amide bond by the modular NRPS of pytA. A tetramic acid is formed and released from the PKS-NRPS pytA to give pyranterreone 5 with the help of the thioesterase pytI. Pyranterreone 5 could be methylated by pytC to afford pyranterreone 6. Both pyranterreones 5 and 6 are subsequently oxidized by the FAD-linked oxidoreductase pytB and the cytochrome P450 monooxygenase pytD to form the fused gamma-pyrone core, resulting in pyranterreones 7 and 11, respectively. The hydroxy group at C-8 of pyranterreones 7 and 11 are dehydrated by the aspartyl protease pytH to form a delta-7 double bond to give pyranterreones 3 and 1, 2 accordingly. The exo-methylene of pyranterreone 3 could be reduced into a pendant methyl by reductase pytE to provide pyranterreone 4, also known as cordylactam. Pyranterreone 4 can be reconverted to pyranterreone 3 through pytB-catalyzed dehydrogenation or further oxidized to pyranterreones 9 and 10. The sequence is that of Cytochrome P450 monooxygenase pytD from Aspergillus terreus (strain NIH 2624 / FGSC A1156).